Reading from the N-terminus, the 997-residue chain is uncharacterized protein (997 aa).

The protein belongs to the MG414/MG415 family.

This is an uncharacterized protein from Mycoplasma pneumoniae (strain ATCC 29342 / M129 / Subtype 1) (Mycoplasmoides pneumoniae).